The sequence spans 236 residues: Eukaryotic translation initiation factor 3 subunit J (236 aa).

Positions 1–86 (MADDWESAAD…KEEEEQKRLA (86 aa)) are disordered. Acidic residues predominate over residues 28–46 (GEDDDEDVKESWEDEEEKK). 2 stretches are compositionally biased toward basic and acidic residues: residues 47–58 (DEEKPTKTEAPV) and 68–86 (AKLE…KRLA). Residues 61–115 (KPNKALKAKLEEQERLKEEEEQKRLAEMTPEEKLAEKLRLQKIQEESDLKSALET) are a coiled coil.

The protein belongs to the eIF-3 subunit J family. In terms of assembly, component of the eukaryotic translation initiation factor 3 (eIF-3) complex. The eIF-3 complex interacts with pix.

It is found in the cytoplasm. Component of the eukaryotic translation initiation factor 3 (eIF-3) complex, which is involved in protein synthesis of a specialized repertoire of mRNAs and, together with other initiation factors, stimulates binding of mRNA and methionyl-tRNAi to the 40S ribosome. The eIF-3 complex specifically targets and initiates translation of a subset of mRNAs involved in cell proliferation. This Drosophila mojavensis (Fruit fly) protein is Eukaryotic translation initiation factor 3 subunit J.